The chain runs to 381 residues: Probable peptidoglycan glycosyltransferase FtsW (381 aa).

9 helical membrane passes run 16–36 (LVLLLMVVALTSFGIVMVYSA), 56–76 (LIFALVGCVGALVTMRIDYQL), 80–100 (WAVPLLFVSLILLVLVLIPGI), 145–165 (LLSAGFLPYMVVLMILLGLLL), 168–188 (PDMGAALTLAAVTIIMLFAAG), 191–211 (LIFILGSGMVAMPFVVYLVVH), 274–294 (VIGEELGFIGVIVIIGMFFIL), 312–332 (FLALGIAVLFAIEAVVNMAVV), and 343–363 (LPFLSYGGSSLLISLFAVGIL).

It belongs to the SEDS family. FtsW subfamily.

The protein resides in the cell inner membrane. The enzyme catalyses [GlcNAc-(1-&gt;4)-Mur2Ac(oyl-L-Ala-gamma-D-Glu-L-Lys-D-Ala-D-Ala)](n)-di-trans,octa-cis-undecaprenyl diphosphate + beta-D-GlcNAc-(1-&gt;4)-Mur2Ac(oyl-L-Ala-gamma-D-Glu-L-Lys-D-Ala-D-Ala)-di-trans,octa-cis-undecaprenyl diphosphate = [GlcNAc-(1-&gt;4)-Mur2Ac(oyl-L-Ala-gamma-D-Glu-L-Lys-D-Ala-D-Ala)](n+1)-di-trans,octa-cis-undecaprenyl diphosphate + di-trans,octa-cis-undecaprenyl diphosphate + H(+). The protein operates within cell wall biogenesis; peptidoglycan biosynthesis. Its function is as follows. Peptidoglycan polymerase that is essential for cell division. The polypeptide is Probable peptidoglycan glycosyltransferase FtsW (Trichlorobacter lovleyi (strain ATCC BAA-1151 / DSM 17278 / SZ) (Geobacter lovleyi)).